The sequence spans 213 residues: V-type ATP synthase subunit D (213 aa).

This sequence belongs to the V-ATPase D subunit family.

Functionally, produces ATP from ADP in the presence of a proton gradient across the membrane. The chain is V-type ATP synthase subunit D from Clostridium botulinum (strain Alaska E43 / Type E3).